A 38-amino-acid chain; its full sequence is Large ribosomal subunit protein bL36 (38 aa).

Belongs to the bacterial ribosomal protein bL36 family.

The polypeptide is Large ribosomal subunit protein bL36 (Paraburkholderia phymatum (strain DSM 17167 / CIP 108236 / LMG 21445 / STM815) (Burkholderia phymatum)).